The primary structure comprises 342 residues: Lipase B (342 aa).

Residues 1 to 18 form the signal peptide; the sequence is MKLLSLTGVAGVLATCVA. A propeptide spanning residues 19 to 25 is cleaved from the precursor; sequence ATPLVKR. Cys-47 and Cys-89 form a disulfide bridge. Asn-99 carries an N-linked (GlcNAc...) asparagine glycan. Catalysis depends on residues Ser-130, Asp-212, and His-249. Cystine bridges form between Cys-241–Cys-283 and Cys-318–Cys-336.

The catalysed reaction is a triacylglycerol + H2O = a diacylglycerol + a fatty acid + H(+). In terms of biological role, hydrolysis of triglycerides. Is very stereospecific both in hydrolysis and in organic synthesis and has a potentially important application in glucolipid synthesis. This is Lipase B from Pseudozyma antarctica (Yeast).